The primary structure comprises 574 residues: Pescadillo homolog (574 aa).

Positions 289–312 (PSEPNDDTEVDEFPADPENAGLEE) are disordered. The segment covering 292–303 (PNDDTEVDEFPA) has biased composition (acidic residues). Positions 323 to 416 (KHKSLFVGLK…LLLPVEDYFP (94 aa)) constitute a BRCT domain. The disordered stretch occupies residues 452–486 (LGLDEEDDDDDDDDEEEDDDDDEEEEDKKLRQLEN). Over residues 453-477 (GLDEEDDDDDDDDEEEDDDDDEEEE) the composition is skewed to acidic residues.

Belongs to the pescadillo family. As to quaternary structure, component of the PeBoW complex, composed of bop1, pes1 and wdr12. The complex is held together by bop1, which interacts with pes1 via its N-terminal domain and with wdr12 via a high-affinity interaction between the seven-bladed beta-propeller domains of the 2 proteins. The PeBoW complex associates with the 66S pre-ribosome.

The protein localises to the nucleus. It is found in the nucleolus. The protein resides in the nucleoplasm. In terms of biological role, component of the PeBoW complex, which is required for maturation of 28S and 5.8S ribosomal RNAs and formation of the 60S ribosome. Required for neural crest migration and eye development. This chain is Pescadillo homolog (pes1), found in Xenopus laevis (African clawed frog).